The chain runs to 143 residues: Deoxyuridine 5'-triphosphate nucleotidohydrolase (143 aa).

DUMP is bound by residues Ser-65, Val-78, Arg-132, and Gly-138.

Belongs to the dUTPase family. Homotrimer. Mg(2+) serves as cofactor.

It carries out the reaction dUTP + H2O = dUMP + diphosphate + H(+). It participates in pyrimidine metabolism; dUMP biosynthesis; dUMP from dCTP (dUTP route): step 2/2. Functionally, involved in nucleotide metabolism via production of dUMP, the immediate precursor of thymidine nucleotides, and decreases the intracellular concentration of dUTP so that uracil cannot be incorporated into DNA. The chain is Deoxyuridine 5'-triphosphate nucleotidohydrolase (DUT1) from Antonospora locustae (Microsporidian parasite).